The chain runs to 287 residues: Ribosomal RNA small subunit methyltransferase A (287 aa).

S-adenosyl-L-methionine contacts are provided by Asn35, Val37, Gly62, Glu83, Asp113, and Asn131.

The protein belongs to the class I-like SAM-binding methyltransferase superfamily. rRNA adenine N(6)-methyltransferase family. RsmA subfamily.

It localises to the cytoplasm. The catalysed reaction is adenosine(1518)/adenosine(1519) in 16S rRNA + 4 S-adenosyl-L-methionine = N(6)-dimethyladenosine(1518)/N(6)-dimethyladenosine(1519) in 16S rRNA + 4 S-adenosyl-L-homocysteine + 4 H(+). In terms of biological role, specifically dimethylates two adjacent adenosines (A1518 and A1519) in the loop of a conserved hairpin near the 3'-end of 16S rRNA in the 30S particle. May play a critical role in biogenesis of 30S subunits. The chain is Ribosomal RNA small subunit methyltransferase A from Thermobifida fusca (strain YX).